The primary structure comprises 429 residues: Histidinol dehydrogenase (429 aa).

NAD(+) is bound by residues Y131, Q193, and N216. Positions 239, 261, and 264 each coordinate substrate. Zn(2+) contacts are provided by Q261 and H264. Active-site proton acceptor residues include E327 and H328. Positions 328, 361, 415, and 420 each coordinate substrate. Zn(2+) is bound at residue D361. H420 provides a ligand contact to Zn(2+).

This sequence belongs to the histidinol dehydrogenase family. Requires Zn(2+) as cofactor.

It catalyses the reaction L-histidinol + 2 NAD(+) + H2O = L-histidine + 2 NADH + 3 H(+). It participates in amino-acid biosynthesis; L-histidine biosynthesis; L-histidine from 5-phospho-alpha-D-ribose 1-diphosphate: step 9/9. Catalyzes the sequential NAD-dependent oxidations of L-histidinol to L-histidinaldehyde and then to L-histidine. In Methanocaldococcus jannaschii (strain ATCC 43067 / DSM 2661 / JAL-1 / JCM 10045 / NBRC 100440) (Methanococcus jannaschii), this protein is Histidinol dehydrogenase (hisD).